Here is a 304-residue protein sequence, read N- to C-terminus: Voltage-dependent anion channel-forming protein YneE (304 aa).

The next 4 helical transmembrane spans lie at 28–48 (LLLN…YTHL), 50–70 (IKFT…FLGF), 194–214 (VLAG…TLIL), and 220–240 (LFCI…TPFI).

This sequence belongs to the anion channel-forming bestrophin (TC 1.A.46) family.

Its subcellular location is the cell membrane. The protein is Voltage-dependent anion channel-forming protein YneE (yneE) of Escherichia coli (strain K12).